The following is a 279-amino-acid chain: Urease accessory protein UreD (279 aa).

Belongs to the UreD family. UreD, UreF and UreG form a complex that acts as a GTP-hydrolysis-dependent molecular chaperone, activating the urease apoprotein by helping to assemble the nickel containing metallocenter of UreC. The UreE protein probably delivers the nickel.

The protein localises to the cytoplasm. Functionally, required for maturation of urease via the functional incorporation of the urease nickel metallocenter. The sequence is that of Urease accessory protein UreD from Nostoc punctiforme (strain ATCC 29133 / PCC 73102).